The primary structure comprises 750 residues: uncharacterized protein (750 aa).

Transmembrane regions (helical) follow at residues Met-1–Thr-21, Tyr-465–Leu-485, and Gly-586–Ser-606.

Its subcellular location is the membrane. This is an uncharacterized protein from Saccharomyces cerevisiae (strain ATCC 204508 / S288c) (Baker's yeast).